The following is a 717-amino-acid chain: Amino-acid acetyltransferase, mitochondrial (717 aa).

Residues 1 to 23 (MFIWTKAPARGLGKASKILPKRD) constitute a mitochondrion transit peptide. Residues 35 to 70 (KQFHTATTSVRRSSSSAKERQRAERQQLTRLLKESP) are disordered. The segment covering 39 to 50 (TATTSVRRSSSS) has biased composition (low complexity). Residues 51–70 (AKERQRAERQQLTRLLKESP) show a composition bias toward basic and acidic residues. In terms of domain architecture, N-acetyltransferase spans 518–691 (NPSIELADDP…GDVDDAKKRD (174 aa)).

This sequence belongs to the acetyltransferase family.

Its subcellular location is the mitochondrion. It catalyses the reaction L-glutamate + acetyl-CoA = N-acetyl-L-glutamate + CoA + H(+). It participates in amino-acid biosynthesis; L-arginine biosynthesis; N(2)-acetyl-L-ornithine from L-glutamate: step 1/4. Its function is as follows. N-acetylglutamate synthase involved in arginine biosynthesis. The protein is Amino-acid acetyltransferase, mitochondrial (arg2) of Pyrenophora tritici-repentis (strain Pt-1C-BFP) (Wheat tan spot fungus).